Consider the following 145-residue polypeptide: Small ribosomal subunit protein eS19 (145 aa).

This sequence belongs to the eukaryotic ribosomal protein eS19 family. As to quaternary structure, component of the small ribosomal subunit.

It is found in the cytoplasm. The protein localises to the nucleus. Functionally, component of the small ribosomal subunit. The ribosome is a large ribonucleoprotein complex responsible for the synthesis of proteins in the cell. Required for pre-rRNA processing and maturation of 40S ribosomal subunits. This Myxine glutinosa (Atlantic hagfish) protein is Small ribosomal subunit protein eS19 (rps19).